Consider the following 87-residue polypeptide: UPF0237 protein YjhC (87 aa).

In terms of domain architecture, ACT spans 4–76 (VVTVVGADKI…EALGVNIHVQ (73 aa)).

Belongs to the UPF0237 family.

This chain is UPF0237 protein YjhC (yjhC), found in Lactococcus lactis subsp. lactis (strain IL1403) (Streptococcus lactis).